A 326-amino-acid polypeptide reads, in one-letter code: MCSTSVYDLEDIPLEDDDPNSIEFKILAFYARHHVFKSTPAVFSPKLSRTRSLSQKALGTWSTDSWTQISLPCRDSLSSEKHISLGKKKSSWRTLFRVTEKEEEPPSSPKEIHAQGPFPVERQGRNQHWSRSLSSVEQCLESEAVDSKVACIANRVAEIVYSWPPPDDSQSQGGGKFKESVPKILHFELQGPQLRPCDSKKDGEDQIINRIVELLKYSGDQLGREIKRDKALVSIFQEGLSYSVFRTITDLFLRDVDTRGESEIKAQGFKAALAIDAIAKLTAIDNHPMNRMLGFGTKYLREYFSPWVQQNGGWEKILGLSHEEVD.

S44 carries the post-translational modification Phosphoserine. Positions T99 to Q127 are disordered. Residues I211 to E225 carry the BH3 motif. Positions W307–W314 match the BH2 motif.

It belongs to the Bcl-2 family. Post-translationally, phosphorylated by MELK, leading to inhibit its pro-apoptotic function.

The protein resides in the cytoplasm. Plays a role in apoptosis. The chain is Apoptosis facilitator Bcl-2-like protein 14 (Bcl2l14) from Rattus norvegicus (Rat).